A 531-amino-acid polypeptide reads, in one-letter code: Probable mitochondrial-processing peptidase subunit beta, mitochondrial (531 aa).

Residues 1-78 (MAMKNLLSLA…ENPDKRFLKY (78 aa)) constitute a mitochondrion transit peptide. The segment at 30–50 (SAIDSVPASASPTALSPPPPH) is disordered. Residue His-141 coordinates Zn(2+). The active-site Proton acceptor is the Glu-144. His-145 is a Zn(2+) binding site. Residue Glu-214 is part of the active site. Glu-221 provides a ligand contact to Zn(2+).

The protein belongs to the peptidase M16 family. Heterodimer of an alpha subunit and a beta subunit subunits, forming the mitochondrial processing protease (MPP) in which the alpha subunit is involved in substrate recognition and binding and the beta subunit is the catalytic subunit. Component of the ubiquinol-cytochrome c oxidoreductase (cytochrome b-c1 complex, complex III, CIII), a multisubunit enzyme composed of 10 subunits. The complex is composed of 3 respiratory subunits cytochrome b (MT-CYB), cytochrome c1 (CYC1-1 or CYC1-2) and Rieske protein (UCR1-1 or UCR1-2), 2 core protein subunits MPPalpha1 (or MPPalpha2) and MPPB, and 5 low-molecular weight protein subunits QCR7-1 (or QCR7-2), UCRQ-1 (or UCRQ-2), QCR9, UCRY and probably QCR6-1 (or QCR6-2). The complex exists as an obligatory dimer and forms supercomplexes (SCs) in the inner mitochondrial membrane with NADH-ubiquinone oxidoreductase (complex I, CI), resulting in different assemblies (supercomplexes SCI(1)III(2) and SCI(2)III(4)). It depends on Zn(2+) as a cofactor.

It is found in the mitochondrion. Its subcellular location is the mitochondrion inner membrane. The enzyme catalyses Release of N-terminal transit peptides from precursor proteins imported into the mitochondrion, typically with Arg in position P2.. Its activity is regulated as follows. Binding to the alpha subunit is required for catalytic activity. Functionally, catalytic subunit of the essential mitochondrial processing protease (MPP), which cleaves the mitochondrial sequence off newly imported precursors proteins. Preferentially, cleaves after an arginine at position P2. Its function is as follows. Component of the ubiquinol-cytochrome c oxidoreductase, a multisubunit transmembrane complex that is part of the mitochondrial electron transport chain which drives oxidative phosphorylation. The respiratory chain contains 3 multisubunit complexes succinate dehydrogenase (complex II, CII), ubiquinol-cytochrome c oxidoreductase (cytochrome b-c1 complex, complex III, CIII) and cytochrome c oxidase (complex IV, CIV), that cooperate to transfer electrons derived from NADH and succinate to molecular oxygen, creating an electrochemical gradient over the inner membrane that drives transmembrane transport and the ATP synthase. The cytochrome b-c1 complex catalyzes electron transfer from ubiquinol to cytochrome c, linking this redox reaction to translocation of protons across the mitochondrial inner membrane, with protons being carried across the membrane as hydrogens on the quinol. In the process called Q cycle, 2 protons are consumed from the matrix, 4 protons are released into the intermembrane space and 2 electrons are passed to cytochrome c. The polypeptide is Probable mitochondrial-processing peptidase subunit beta, mitochondrial (MPPbeta) (Arabidopsis thaliana (Mouse-ear cress)).